A 227-amino-acid chain; its full sequence is Homeobox protein HD-10 (227 aa).

Residues 30–89 (FVKHRKRTTKAQLKVLEETFETNIRPDANMRKKLGEQLGMTPRSVQVWFQNRRAKIKKLT) constitute a DNA-binding region (homeobox). The interval 88 to 115 (LTQKKMMQQENTDNTKGPDAAHGSSSPK) is disordered. Residues 92–102 (KMMQQENTDNT) are compositionally biased toward polar residues.

The protein resides in the nucleus. This is Homeobox protein HD-10 (HD-10) from Encephalitozoon cuniculi (strain GB-M1) (Microsporidian parasite).